A 493-amino-acid chain; its full sequence is Alpha-amylase-related protein (493 aa).

The signal sequence occupies residues 1 to 19 (MFKLALTLTLCLAGSLSLA). A Pyrrolidone carboxylic acid modification is found at Gln20. Cysteines 47 and 103 form a disulfide. Positions 117, 168, and 177 each coordinate Ca(2+). Cys156 and Cys170 are disulfide-bonded. Arg205 is a chloride binding site. Catalysis depends on Asp207, which acts as the Nucleophile. His211 is a Ca(2+) binding site. The Proton donor role is filled by Glu244. The chloride site is built by Asn307 and Arg342. Intrachain disulfides connect Cys375–Cys381, Cys417–Cys440, and Cys447–Cys459.

Belongs to the glycosyl hydrolase 13 family. In terms of assembly, monomer. Ca(2+) serves as cofactor. Requires chloride as cofactor.

The protein localises to the secreted. It catalyses the reaction Endohydrolysis of (1-&gt;4)-alpha-D-glucosidic linkages in polysaccharides containing three or more (1-&gt;4)-alpha-linked D-glucose units.. In Drosophila teissieri (Fruit fly), this protein is Alpha-amylase-related protein (Amyrel).